Consider the following 258-residue polypeptide: Acetylglutamate kinase (258 aa).

Residues 41-42 (GG), R63, and N156 each bind substrate.

It belongs to the acetylglutamate kinase family. ArgB subfamily.

Its subcellular location is the cytoplasm. It catalyses the reaction N-acetyl-L-glutamate + ATP = N-acetyl-L-glutamyl 5-phosphate + ADP. It functions in the pathway amino-acid biosynthesis; L-arginine biosynthesis; N(2)-acetyl-L-ornithine from L-glutamate: step 2/4. Catalyzes the ATP-dependent phosphorylation of N-acetyl-L-glutamate. The protein is Acetylglutamate kinase of Geobacillus thermodenitrificans (strain NG80-2).